The chain runs to 251 residues: 5'-nucleotidase SurE (251 aa).

A divalent metal cation contacts are provided by Asp8, Asp9, Ser42, and Asn94.

It belongs to the SurE nucleotidase family. A divalent metal cation serves as cofactor.

The protein resides in the cytoplasm. It carries out the reaction a ribonucleoside 5'-phosphate + H2O = a ribonucleoside + phosphate. Functionally, nucleotidase that shows phosphatase activity on nucleoside 5'-monophosphates. The sequence is that of 5'-nucleotidase SurE from Hydrogenovibrio crunogenus (strain DSM 25203 / XCL-2) (Thiomicrospira crunogena).